The chain runs to 107 residues: MKYLAAYALISLSGKTPSKADVEAVLKAAGVPVDSSRVEELLSEVEGKDFDALCAEGKAKLVGGVTAGGAAPSGGAAAHAAAASAPAAAAAEAEEEDDDDMGFGLFD.

Residues 86 to 107 form a disordered region; it reads PAAAAAEAEEEDDDDMGFGLFD. Residues 92-101 show a composition bias toward acidic residues; that stretch reads EAEEEDDDDM.

This sequence belongs to the eukaryotic ribosomal protein P1/P2 family. P1 and P2 exist as dimers at the large ribosomal subunit. In terms of processing, phosphorylated.

Functionally, plays an important role in the elongation step of protein synthesis. This is Large ribosomal subunit protein P2 from Trypanosoma brucei brucei.